A 236-amino-acid chain; its full sequence is UPF0257 lipoprotein YnfC (236 aa).

The first 16 residues, 1–16 (MKKPLLLTLLCMILAG), serve as a signal peptide directing secretion. The N-palmitoyl cysteine moiety is linked to residue Cys17. The S-diacylglycerol cysteine moiety is linked to residue Cys17.

Belongs to the UPF0257 family.

The protein resides in the cell membrane. The polypeptide is UPF0257 lipoprotein YnfC (Salmonella dublin (strain CT_02021853)).